The following is a 307-amino-acid chain: Alpha/beta-gliadin MM1 (307 aa).

Residues 1–20 form the signal peptide; that stretch reads MKTFLILALLAIVATTARIA. The span at 29-55 shows a compositional bias: low complexity; it reads QPQNPSQQQPQEQVPLVQQQQFPGQQQ. Disordered regions lie at residues 29-134 and 242-267; these read QPQN…QQQQ and QQQY…SVQP. Pro residues-rich tracts occupy residues 56 to 71 and 81 to 113; these read PFPP…PFPS and FPQP…PQQP. A sufficient to initiate the primary inflammatory response to gluten in Celiac Sprue patients region spans residues 76–108; sequence LQLQPFPQPQLPYPQPQLPYPQPQLPYPQPQPF. Composition is skewed to low complexity over residues 114–134 and 242–260; these read YPQS…QQQQ and QQQY…QNPQ.

The protein belongs to the gliadin/glutenin family. Post-translationally, substrate of transglutaminase. In terms of tissue distribution, expressed in endosperm.

Gliadin is the major seed storage protein in wheat. This is Alpha/beta-gliadin MM1 from Triticum aestivum (Wheat).